Consider the following 233-residue polypeptide: Leucyl/phenylalanyl-tRNA--protein transferase (233 aa).

Belongs to the L/F-transferase family.

It localises to the cytoplasm. The catalysed reaction is N-terminal L-lysyl-[protein] + L-leucyl-tRNA(Leu) = N-terminal L-leucyl-L-lysyl-[protein] + tRNA(Leu) + H(+). It catalyses the reaction N-terminal L-arginyl-[protein] + L-leucyl-tRNA(Leu) = N-terminal L-leucyl-L-arginyl-[protein] + tRNA(Leu) + H(+). The enzyme catalyses L-phenylalanyl-tRNA(Phe) + an N-terminal L-alpha-aminoacyl-[protein] = an N-terminal L-phenylalanyl-L-alpha-aminoacyl-[protein] + tRNA(Phe). Functionally, functions in the N-end rule pathway of protein degradation where it conjugates Leu, Phe and, less efficiently, Met from aminoacyl-tRNAs to the N-termini of proteins containing an N-terminal arginine or lysine. The protein is Leucyl/phenylalanyl-tRNA--protein transferase of Shewanella denitrificans (strain OS217 / ATCC BAA-1090 / DSM 15013).